Consider the following 274-residue polypeptide: MSVRKLKPITPGQRFRVVNGYDAITTDKPERSLIAPIKNSGGRNSQGKMTMRYTGGGHKQRYRIIDFKRTKDGIPATVKSIEYDPNRTAFIALLAYADGEKTYIIAQNGLKVGQKLVSGPESQPEIGNTLPLSRIPLGTVISCIELRPGQGAVIARSAGTFAQLMARDGKYATIKMPSGETRLILLTCSATIGAVSNSDHQLVVSGKAGRTRWLGRRPRTRPVAMNPVDHPMGGGEGRSSGGHPRSRNGLPAKGYRTRSKKNPSNKYIVERRKK.

Residues 214–274 (LGRRPRTRPV…NKYIVERRKK (61 aa)) form a disordered region.

The protein belongs to the universal ribosomal protein uL2 family. In terms of assembly, part of the 50S ribosomal subunit. Forms a bridge to the 30S subunit in the 70S ribosome.

Functionally, one of the primary rRNA binding proteins. Required for association of the 30S and 50S subunits to form the 70S ribosome, for tRNA binding and peptide bond formation. It has been suggested to have peptidyltransferase activity; this is somewhat controversial. Makes several contacts with the 16S rRNA in the 70S ribosome. The polypeptide is Large ribosomal subunit protein uL2 (Flavobacterium johnsoniae (strain ATCC 17061 / DSM 2064 / JCM 8514 / BCRC 14874 / CCUG 350202 / NBRC 14942 / NCIMB 11054 / UW101) (Cytophaga johnsonae)).